Here is a 471-residue protein sequence, read N- to C-terminus: Tryptophanase (471 aa).

An N6-(pyridoxal phosphate)lysine modification is found at Lys-270.

The protein belongs to the beta-eliminating lyase family. As to quaternary structure, homotetramer. It depends on pyridoxal 5'-phosphate as a cofactor.

The enzyme catalyses L-tryptophan + H2O = indole + pyruvate + NH4(+). The protein operates within amino-acid degradation; L-tryptophan degradation via pyruvate pathway; indole and pyruvate from L-tryptophan: step 1/1. The sequence is that of Tryptophanase from Histophilus somni (strain 129Pt) (Haemophilus somnus).